Reading from the N-terminus, the 472-residue chain is Type I restriction enzyme BthVORF4518P methylase subunit (472 aa).

S-adenosyl-L-methionine contacts are provided by residues Gln-151–Arg-156, Thr-181–Gly-183, Asp-214, and Asp-243–Ser-244.

This sequence belongs to the N(4)/N(6)-methyltransferase family. In terms of assembly, the type I restriction/modification system is composed of three polypeptides R, M and S; the restriction enzyme has stoichiometry R(2)M(2)S(1) while the methyltransferase is M(2)S(1).

The catalysed reaction is a 2'-deoxyadenosine in DNA + S-adenosyl-L-methionine = an N(6)-methyl-2'-deoxyadenosine in DNA + S-adenosyl-L-homocysteine + H(+). Its function is as follows. The subtype gamma methyltransferase (M) subunit of a type I restriction enzyme. The M and S subunits together form a methyltransferase (MTase) that methylates two adenine residues of an undetermined sequence. In the presence of the R subunit the complex can also act as an endonuclease, binding to the same target sequence but cutting the DNA some distance from this site. Whether the DNA is cut or modified depends on the methylation state of the target sequence. When the target site is unmodified, the DNA is cut. When the target site is hemimethylated, the complex acts as a maintenance MTase modifying the DNA so that both strands become methylated. After locating a non-methylated recognition site, the enzyme complex serves as a molecular motor that translocates DNA in an ATP-dependent manner until a collision occurs that triggers cleavage. The sequence is that of Type I restriction enzyme BthVORF4518P methylase subunit from Bacteroides thetaiotaomicron (strain ATCC 29148 / DSM 2079 / JCM 5827 / CCUG 10774 / NCTC 10582 / VPI-5482 / E50).